The sequence spans 213 residues: Probable GTP-binding protein EngB (213 aa).

Residues 25 to 203 form the EngB-type G domain; that stretch reads EGTEVAFAGR…EDVLNGWLLP (179 aa). Residues 33-40, 60-64, 80-83, 147-150, and 179-184 each bind GTP; these read GRSNAGKS, GRTQL, DLPG, TKAD, and AQMFSA. The Mg(2+) site is built by S40 and T62.

This sequence belongs to the TRAFAC class TrmE-Era-EngA-EngB-Septin-like GTPase superfamily. EngB GTPase family. Mg(2+) is required as a cofactor.

Its function is as follows. Necessary for normal cell division and for the maintenance of normal septation. This Saccharophagus degradans (strain 2-40 / ATCC 43961 / DSM 17024) protein is Probable GTP-binding protein EngB.